Here is a 672-residue protein sequence, read N- to C-terminus: UvrABC system protein B (672 aa).

A Helicase ATP-binding domain is found at 26–183 (EGLEDGLAHQ…RRLSELQYVR (158 aa)). 39–46 (GVTGSGKT) serves as a coordination point for ATP. Residues 92–115 (YYDYYQPEAYVPSSDTFIEKDASV) carry the Beta-hairpin motif. Residues 431–597 (QVDDLLSEIN…ALNKKVTDIL (167 aa)) enclose the Helicase C-terminal domain. The interval 601–623 (DGPVRSRTKGARGQRAAEPHPDY) is disordered. Positions 632 to 667 (EQQIQRLETQMYQHAQNLEFEQAAALRDEIHILREQ) constitute a UVR domain.

It belongs to the UvrB family. Forms a heterotetramer with UvrA during the search for lesions. Interacts with UvrC in an incision complex.

The protein resides in the cytoplasm. Functionally, the UvrABC repair system catalyzes the recognition and processing of DNA lesions. A damage recognition complex composed of 2 UvrA and 2 UvrB subunits scans DNA for abnormalities. Upon binding of the UvrA(2)B(2) complex to a putative damaged site, the DNA wraps around one UvrB monomer. DNA wrap is dependent on ATP binding by UvrB and probably causes local melting of the DNA helix, facilitating insertion of UvrB beta-hairpin between the DNA strands. Then UvrB probes one DNA strand for the presence of a lesion. If a lesion is found the UvrA subunits dissociate and the UvrB-DNA preincision complex is formed. This complex is subsequently bound by UvrC and the second UvrB is released. If no lesion is found, the DNA wraps around the other UvrB subunit that will check the other stand for damage. The polypeptide is UvrABC system protein B (Edwardsiella ictaluri (strain 93-146)).